The chain runs to 496 residues: Tyrosine-protein kinase Srms (496 aa).

Positions 55–116 constitute an SH3 domain; sequence PRARLFRALY…PVTYLAKATP (62 aa). The SH2 domain maps to 124–216; the sequence is WYFSGISRAQ…LIQNPLLQPC (93 aa). The Protein kinase domain occupies 234–495; sequence FVLRRKLGEG…AINRRLHLGL (262 aa). ATP contacts are provided by residues 240 to 248 and K262; that span reads LGEGFFGEV. D354 functions as the Proton acceptor in the catalytic mechanism. Position 384 is a phosphotyrosine; by autocatalysis (Y384).

It belongs to the protein kinase superfamily. Tyr protein kinase family. SRC subfamily. In terms of assembly, interacts (via the SH2 and SH3 domains) with DOK1. Interacts with KHDRBS1/SAM68 and VIM. Higher expression in liver, lung, thymus and skin than in brain, kidney, heart and spleen. In skin, highly expressed in keratinocytes. Abundant in lung, liver, spleen, kidney and testis and is also detected in the cerebrum.

It is found in the cytoplasm. The enzyme catalyses L-tyrosyl-[protein] + ATP = O-phospho-L-tyrosyl-[protein] + ADP + H(+). Its function is as follows. Non-receptor tyrosine-protein kinase which phosphorylates DOK1 on tyrosine residues. Also phosphorylates KHDRBS1/SAM68 and VIM on tyrosine residues. Phosphorylation of KHDRBS1 is EGF-dependent. Phosphorylates OTUB1, promoting deubiquitination of RPTOR. The sequence is that of Tyrosine-protein kinase Srms (Srms) from Mus musculus (Mouse).